The sequence spans 248 residues: Ubiquinone biosynthesis O-methyltransferase (248 aa).

Positions 40, 71, 92, and 135 each coordinate S-adenosyl-L-methionine.

Belongs to the methyltransferase superfamily. UbiG/COQ3 family.

It carries out the reaction a 3-demethylubiquinol + S-adenosyl-L-methionine = a ubiquinol + S-adenosyl-L-homocysteine + H(+). It catalyses the reaction a 3-(all-trans-polyprenyl)benzene-1,2-diol + S-adenosyl-L-methionine = a 2-methoxy-6-(all-trans-polyprenyl)phenol + S-adenosyl-L-homocysteine + H(+). Its pathway is cofactor biosynthesis; ubiquinone biosynthesis. In terms of biological role, O-methyltransferase that catalyzes the 2 O-methylation steps in the ubiquinone biosynthetic pathway. This is Ubiquinone biosynthesis O-methyltransferase from Dinoroseobacter shibae (strain DSM 16493 / NCIMB 14021 / DFL 12).